The sequence spans 117 residues: MLVNARAIRQSIGIVVAQCRRDLESNRTLDYRTRMRTSLILVAMVMVSVLLPYTYGSSCDSFCTEQANKCLTGCEGFVGCMECTNFAGHCREQCRKRSVKRRKEIRARFTKEPTEES.

At 1 to 36 the chain is on the cytoplasmic side; sequence MLVNARAIRQSIGIVVAQCRRDLESNRTLDYRTRMR. Residues 37-56 traverse the membrane as a helical segment; that stretch reads TSLILVAMVMVSVLLPYTYG. Topologically, residues 57 to 117 are extracellular; the sequence is SSCDSFCTEQ…RFTKEPTEES (61 aa). Intrachain disulfides connect C59/C94, C63/C90, C70/C83, and C74/C80.

Post-translationally, the mature peptide may be cleaved at a dibasic residue site and be shorter than the sequence shown (possibly residues 1-94). As to expression, expressed in endodermal ganglion neurons, apparently bipolar and following mesentery folds (observed in both planulae and primary polyps). It not expressed in nematocytes.

The protein resides in the membrane. The polypeptide is Protein Aeq5-like2 (Nematostella vectensis (Starlet sea anemone)).